Here is a 302-residue protein sequence, read N- to C-terminus: tRNA pseudouridine synthase B (302 aa).

Asp-45 functions as the Nucleophile in the catalytic mechanism.

The protein belongs to the pseudouridine synthase TruB family. Type 1 subfamily.

It carries out the reaction uridine(55) in tRNA = pseudouridine(55) in tRNA. Functionally, responsible for synthesis of pseudouridine from uracil-55 in the psi GC loop of transfer RNAs. The protein is tRNA pseudouridine synthase B of Francisella tularensis subsp. holarctica (strain FTNF002-00 / FTA).